Consider the following 491-residue polypeptide: MSSQYLRIFQQPRSAILLILGFASGLPLALTSGTLQAWMTVENIDLKTIGFFSLVGQAYVFKFLWSPLMDRYTPPFFGRRRGWLLATQILLLVAIAAMGFLEPGTQLRWMAALAVVIAFCSASQDIVFDAWKTDVLPAEERGAGAAISVLGYRLGMLVSGGLALWLADKWLGWQGMYWLMAALLIPCIIATLLAPEPTDTIPVPKTLEQAVVAPLRDFFGRNNAWLILLLIVLYKLGDAFAMSLTTTFLIRGVGFDAGEVGVVNKTLGLLATIVGALYGGILMQRLSLFRALLIFGILQGASNAGYWLLSITDKHLYSMGAAVFFENLCGGMGTSAFVALLMTLCNKSFSATQFALLSALSAVGRVYVGPVAGWFVEAHGWSTFYLFSVAAAVPGLILLLVCRQTLEYTRVNDNFISRTAYPAGYAFAMWTLAAGVSLLAVWLLLLTMDALDLTHFSFLPALLEVGVLVALSGVVLGGLLDYLALRKTHLT.

Residues 1–11 (MSSQYLRIFQQ) are Cytoplasmic-facing. A helical membrane pass occupies residues 12–32 (PRSAILLILGFASGLPLALTS). Residues 33-47 (GTLQAWMTVENIDLK) are Periplasmic-facing. The chain crosses the membrane as a helical span at residues 48–61 (TIGFFSLVGQAYVF). Residues 62–81 (KFLWSPLMDRYTPPFFGRRR) lie on the Cytoplasmic side of the membrane. Residues 82–105 (GWLLATQILLLVAIAAMGFLEPGT) traverse the membrane as a helical segment. A topological domain (periplasmic) is located at residue Gln-106. A helical transmembrane segment spans residues 107 to 124 (LRWMAALAVVIAFCSASQ). At 125 to 221 (DIVFDAWKTD…VAPLRDFFGR (97 aa)) the chain is on the cytoplasmic side. The chain crosses the membrane as a helical span at residues 222 to 240 (NNAWLILLLIVLYKLGDAF). Topologically, residues 241–264 (AMSLTTTFLIRGVGFDAGEVGVVN) are periplasmic. The helical transmembrane segment at 265–284 (KTLGLLATIVGALYGGILMQ) threads the bilayer. The Cytoplasmic segment spans residues 285–287 (RLS). Residues 288-303 (LFRALLIFGILQGASN) traverse the membrane as a helical segment. The Periplasmic segment spans residues 304–327 (AGYWLLSITDKHLYSMGAAVFFEN). Residues 328-346 (LCGGMGTSAFVALLMTLCN) form a helical membrane-spanning segment. The Cytoplasmic portion of the chain corresponds to 347–421 (KSFSATQFAL…NDNFISRTAY (75 aa)). The helical transmembrane segment at 422 to 453 (PAGYAFAMWTLAAGVSLLAVWLLLLTMDALDL) threads the bilayer. Residues 454–457 (THFS) are Periplasmic-facing. Residues 458-485 (FLPALLEVGVLVALSGVVLGGLLDYLAL) form a helical membrane-spanning segment. Residues 486–491 (RKTHLT) lie on the Cytoplasmic side of the membrane.

It belongs to the major facilitator superfamily.

Its subcellular location is the cell inner membrane. Permease involved in cell wall peptidoglycan recycling. Transports, from the periplasm into the cytoplasm, the disaccharide N-acetylglucosaminyl-beta-1,4-anhydro-N-acetylmuramic acid (GlcNAc-anhMurNAc) and GlcNAc-anhMurNAc-peptides. Transport is dependent on the proton motive force. The protein is Anhydromuropeptide permease (ampG) of Escherichia coli O157:H7.